Consider the following 129-residue polypeptide: MAKKTRRVVKRKKKIAVDHGVVHIKSSYNNTIITLTDPDGKVITWGSGGTAGFQGTRKGTPYAAQLAADQVAKEAVKLGIKKVDILVKGPGSGREAAIRTFQAAGLEIGTIKDVTPIPFNGCRPKKKRV.

Belongs to the universal ribosomal protein uS11 family. In terms of assembly, part of the 30S ribosomal subunit. Interacts with proteins S7 and S18. Binds to IF-3.

Located on the platform of the 30S subunit, it bridges several disparate RNA helices of the 16S rRNA. Forms part of the Shine-Dalgarno cleft in the 70S ribosome. In Thermosipho melanesiensis (strain DSM 12029 / CIP 104789 / BI429), this protein is Small ribosomal subunit protein uS11.